We begin with the raw amino-acid sequence, 224 residues long: Uracil-DNA glycosylase 2 (224 aa).

The active-site Proton acceptor is the aspartate 64.

The protein belongs to the uracil-DNA glycosylase (UDG) superfamily. UNG family.

The protein localises to the cytoplasm. The enzyme catalyses Hydrolyzes single-stranded DNA or mismatched double-stranded DNA and polynucleotides, releasing free uracil.. Functionally, excises uracil residues from the DNA which can arise as a result of misincorporation of dUMP residues by DNA polymerase or due to deamination of cytosine. This chain is Uracil-DNA glycosylase 2, found in Listeria monocytogenes serovar 1/2a (strain ATCC BAA-679 / EGD-e).